The sequence spans 76 residues: Small ribosomal subunit protein bS18 (76 aa).

The protein belongs to the bacterial ribosomal protein bS18 family. As to quaternary structure, part of the 30S ribosomal subunit. Forms a tight heterodimer with protein bS6.

Functionally, binds as a heterodimer with protein bS6 to the central domain of the 16S rRNA, where it helps stabilize the platform of the 30S subunit. This Aeromonas salmonicida (strain A449) protein is Small ribosomal subunit protein bS18.